Consider the following 185-residue polypeptide: HTH-type transcriptional regulator SAB2452 (185 aa).

The 61-residue stretch at 6 to 66 (IENRQRIEEI…YVIQRDLNTF (61 aa)) folds into the HTH tetR-type domain. The segment at residues 29-48 (SMNRIAKELGIGMGTLYRHF) is a DNA-binding region (H-T-H motif).

In Staphylococcus aureus (strain bovine RF122 / ET3-1), this protein is HTH-type transcriptional regulator SAB2452.